A 193-amino-acid polypeptide reads, in one-letter code: Cell wall galactomannoprotein (193 aa).

Positions 1–17 (MFFRILALLPLVFLVTA) are cleaved as a signal peptide. 2 N-linked (GlcNAc...) asparagine glycosylation sites follow: N38 and N173.

It belongs to the cell wall mannoprotein 1 family. Galactomannoprotein, glycosylated.

The protein localises to the secreted. It localises to the cell wall. Constitutive protein of the cell wall. In Armillaria ostoyae (Armillaria root rot fungus), this protein is Cell wall galactomannoprotein.